A 532-amino-acid polypeptide reads, in one-letter code: Apolipoprotein N-acyltransferase (532 aa).

The next 6 helical transmembrane spans lie at 37 to 57, 75 to 95, 106 to 126, 128 to 148, 179 to 199, and 207 to 227; these read IFVA…GAIA, WWFG…ALLV, LAVL…AMIA, LLWS…ALAE, VIGL…PALL, and TGIG…AWTL. One can recognise a CN hydrolase domain in the interval 245–494; sequence VQPSIAQAMK…VGVVDSYLPS (250 aa). Glutamate 289 (proton acceptor) is an active-site residue. The active site involves lysine 353. Catalysis depends on cysteine 406, which acts as the Nucleophile. A helical transmembrane segment spans residues 505-525; the sequence is GWIQTVLILLTLLAASVGLIL.

This sequence belongs to the CN hydrolase family. Apolipoprotein N-acyltransferase subfamily.

It localises to the cell inner membrane. It carries out the reaction N-terminal S-1,2-diacyl-sn-glyceryl-L-cysteinyl-[lipoprotein] + a glycerophospholipid = N-acyl-S-1,2-diacyl-sn-glyceryl-L-cysteinyl-[lipoprotein] + a 2-acyl-sn-glycero-3-phospholipid + H(+). It participates in protein modification; lipoprotein biosynthesis (N-acyl transfer). Its function is as follows. Catalyzes the phospholipid dependent N-acylation of the N-terminal cysteine of apolipoprotein, the last step in lipoprotein maturation. This is Apolipoprotein N-acyltransferase from Brucella melitensis biotype 1 (strain ATCC 23456 / CCUG 17765 / NCTC 10094 / 16M).